A 269-amino-acid polypeptide reads, in one-letter code: tRNA pseudouridine synthase A (269 aa).

D51 functions as the Nucleophile in the catalytic mechanism. Y109 contacts substrate.

It belongs to the tRNA pseudouridine synthase TruA family. Homodimer.

The enzyme catalyses uridine(38/39/40) in tRNA = pseudouridine(38/39/40) in tRNA. Formation of pseudouridine at positions 38, 39 and 40 in the anticodon stem and loop of transfer RNAs. The sequence is that of tRNA pseudouridine synthase A from Haemophilus influenzae (strain ATCC 51907 / DSM 11121 / KW20 / Rd).